Reading from the N-terminus, the 456-residue chain is 3-isopropylmalate dehydratase large subunit (456 aa).

[4Fe-4S] cluster contacts are provided by Cys336, Cys396, and Cys399.

This sequence belongs to the aconitase/IPM isomerase family. LeuC type 1 subfamily. As to quaternary structure, heterodimer of LeuC and LeuD. [4Fe-4S] cluster is required as a cofactor.

It carries out the reaction (2R,3S)-3-isopropylmalate = (2S)-2-isopropylmalate. It functions in the pathway amino-acid biosynthesis; L-leucine biosynthesis; L-leucine from 3-methyl-2-oxobutanoate: step 2/4. Functionally, catalyzes the isomerization between 2-isopropylmalate and 3-isopropylmalate, via the formation of 2-isopropylmaleate. The protein is 3-isopropylmalate dehydratase large subunit of Staphylococcus epidermidis (strain ATCC 35984 / DSM 28319 / BCRC 17069 / CCUG 31568 / BM 3577 / RP62A).